Consider the following 510-residue polypeptide: Histone deacetylase 3 (510 aa).

The tract at residues 24–338 (RRVCYFYDPE…WCYETGVALG (315 aa)) is histone deacetylase. Histidine 158 acts as the Proton donor/acceptor in catalysis. Zn(2+) is bound by residues aspartate 193, histidine 195, and aspartate 281. A disordered region spans residues 394 to 510 (PSVQFQERIP…ARNEPGSSPK (117 aa)). 2 stretches are compositionally biased toward basic and acidic residues: residues 418–434 (DERH…DHKP) and 448–472 (VKRE…HKGP). The segment covering 485 to 503 (APTADANAVAVNAPGNARN) has biased composition (low complexity).

The protein belongs to the histone deacetylase family. HD Type 1 subfamily. The cofactor is Zn(2+). In terms of tissue distribution, expressed in roots.

It is found in the nucleus. The enzyme catalyses N(6)-acetyl-L-lysyl-[histone] + H2O = L-lysyl-[histone] + acetate. Functionally, responsible for the deacetylation of lysine residues on the N-terminal part of the core histones (H2A, H2B, H3 and H4). Histone deacetylation gives a tag for epigenetic repression and plays an important role in transcriptional regulation, cell cycle progression and developmental events. Histone deacetylases act via the formation of large multiprotein complexes. The chain is Histone deacetylase 3 from Oryza sativa subsp. japonica (Rice).